The primary structure comprises 135 residues: Ribonuclease VapC26 (135 aa).

Residues 1–118 (MIIDTSALLA…TRTILTLDRR (118 aa)) enclose the PINc domain. Mg(2+) contacts are provided by D4 and D97.

It belongs to the PINc/VapC protein family. It depends on Mg(2+) as a cofactor.

Toxic component of a type II toxin-antitoxin (TA) system. An RNase. Upon expression in M.smegmatis inhibits colony formation. Its toxic effect is neutralized by coexpression with cognate antitoxin VapB26. The chain is Ribonuclease VapC26 from Mycobacterium tuberculosis (strain ATCC 25618 / H37Rv).